Reading from the N-terminus, the 275-residue chain is 2,3,4,5-tetrahydropyridine-2,6-dicarboxylate N-succinyltransferase (275 aa).

This sequence belongs to the transferase hexapeptide repeat family.

It is found in the cytoplasm. The enzyme catalyses (S)-2,3,4,5-tetrahydrodipicolinate + succinyl-CoA + H2O = (S)-2-succinylamino-6-oxoheptanedioate + CoA. It functions in the pathway amino-acid biosynthesis; L-lysine biosynthesis via DAP pathway; LL-2,6-diaminopimelate from (S)-tetrahydrodipicolinate (succinylase route): step 1/3. In Burkholderia multivorans (strain ATCC 17616 / 249), this protein is 2,3,4,5-tetrahydropyridine-2,6-dicarboxylate N-succinyltransferase.